Reading from the N-terminus, the 296-residue chain is 4-hydroxy-tetrahydrodipicolinate synthase (296 aa).

Thr-49 serves as a coordination point for pyruvate. The Proton donor/acceptor role is filled by Tyr-137. Lys-165 (schiff-base intermediate with substrate) is an active-site residue. Pyruvate is bound at residue Val-207.

It belongs to the DapA family. In terms of assembly, homotetramer; dimer of dimers.

It localises to the cytoplasm. It catalyses the reaction L-aspartate 4-semialdehyde + pyruvate = (2S,4S)-4-hydroxy-2,3,4,5-tetrahydrodipicolinate + H2O + H(+). It functions in the pathway amino-acid biosynthesis; L-lysine biosynthesis via DAP pathway; (S)-tetrahydrodipicolinate from L-aspartate: step 3/4. Functionally, catalyzes the condensation of (S)-aspartate-beta-semialdehyde [(S)-ASA] and pyruvate to 4-hydroxy-tetrahydrodipicolinate (HTPA). The chain is 4-hydroxy-tetrahydrodipicolinate synthase from Nitrobacter hamburgensis (strain DSM 10229 / NCIMB 13809 / X14).